Consider the following 277-residue polypeptide: Large ribosomal subunit protein uL2 (277 aa).

The segment at 222-265 is disordered; sequence GVAMNPIDHPHGGGEGRTSGGRHPVTPWGKPTKGKKTRTNKSTD.

The protein belongs to the universal ribosomal protein uL2 family. Part of the 50S ribosomal subunit. Forms a bridge to the 30S subunit in the 70S ribosome.

Its function is as follows. One of the primary rRNA binding proteins. Required for association of the 30S and 50S subunits to form the 70S ribosome, for tRNA binding and peptide bond formation. It has been suggested to have peptidyltransferase activity; this is somewhat controversial. Makes several contacts with the 16S rRNA in the 70S ribosome. The polypeptide is Large ribosomal subunit protein uL2 (Bradyrhizobium sp. (strain BTAi1 / ATCC BAA-1182)).